A 350-amino-acid polypeptide reads, in one-letter code: Ookinete surface protein PIMMS43 (350 aa).

The N-terminal stretch at 1–24 (MIKLCTFLSLFLIFFFLNLNAING) is a signal peptide. The helical transmembrane segment at 330-350 (NSIASKLMSVFVFIAVIIYIL) threads the bilayer.

In terms of assembly, forms multimers, perhaps with an unknown protein(s).

The protein resides in the membrane. In terms of biological role, involved in ookinete evasion of the mosquito complement-like response, oocyst maturation, sporozoite development and infectivity. The polypeptide is Ookinete surface protein PIMMS43 (Plasmodium berghei (strain Anka)).